A 40-amino-acid polypeptide reads, in one-letter code: Spodomicin (40 aa).

Intrachain disulfides connect cysteine 6-cysteine 20, cysteine 10-cysteine 32, and cysteine 21-cysteine 39.

As to quaternary structure, monomer. Post-translationally, contains three disulfide bonds. As to expression, hemolymph.

The protein localises to the secreted. Fungicide. This chain is Spodomicin, found in Spodoptera littoralis (Egyptian cotton leafworm).